Reading from the N-terminus, the 58-residue chain is Protein YecU (58 aa).

In Escherichia coli (strain K12), this protein is Protein YecU.